A 395-amino-acid chain; its full sequence is Cuticlin-5 (395 aa).

Positions M1–G18 are cleaved as a signal peptide. Over E19–T358 the chain is Extracellular. One can recognise a ZP domain in the interval S46–D291. Residues N90 and N307 are each glycosylated (N-linked (GlcNAc...) asparagine). Residues L359–C379 traverse the membrane as a helical segment. The Cytoplasmic segment spans residues C380–L395.

The protein localises to the cell membrane. Functionally, plays a role in alae formation in L1 and dauer stage larvae. The chain is Cuticlin-5 from Caenorhabditis elegans.